Consider the following 169-residue polypeptide: Lutropin/choriogonadotropin subunit beta (169 aa).

An N-terminal signal peptide occupies residues 1–20 (METLQGLLLWMLLSVGGVWA). 6 disulfide bridges follow: Cys-29/Cys-77, Cys-43/Cys-92, Cys-46/Cys-130, Cys-54/Cys-108, Cys-58/Cys-110, and Cys-113/Cys-120. Asn-33 is a glycosylation site (N-linked (GlcNAc...) asparagine). The segment at 131–169 (APQASSSSKDPPSQPLTSTSTPTPGASRRSSHPLPIKTS) is disordered. Ser-138 and Ser-143 each carry an O-linked (GalNAc...) serine glycan. Residues 145-158 (PLTSTSTPTPGASR) show a composition bias toward low complexity. The O-linked (GalNAc...) threonine glycan is linked to Thr-147. Ser-148 is a glycosylation site (O-linked (GalNAc...) serine). An O-linked (GalNAc...) threonine glycan is attached at Thr-149. O-linked (GalNAc...) serine glycosylation occurs at Ser-150. 2 O-linked (GalNAc...) threonine glycosylation sites follow: Thr-151 and Thr-153. Ser-157, Ser-160, Ser-161, and Ser-169 each carry an O-linked (GalNAc...) serine glycan.

Belongs to the glycoprotein hormones subunit beta family. Heterodimer of a common alpha chain and a unique beta chain which confers biological specificity to thyrotropin, lutropin, follitropin and gonadotropin. Microheterogeneity at Asn-33. O-glycosylation appears to be responsible for the beta subunit contribution to the difference in LH-receptor binding activity between LSH-B and CG-B.

It localises to the secreted. Functionally, promotes spermatogenesis and ovulation by stimulating the testes and ovaries to synthesize steroids. The chain is Lutropin/choriogonadotropin subunit beta (LHB) from Equus caballus (Horse).